Consider the following 892-residue polypeptide: Ataxin-7 (892 aa).

Residues 1-15 (MSERAADDVRGEPRR) are compositionally biased toward basic and acidic residues. Disordered regions lie at residues 1-74 (MSER…SAAA) and 195-247 (SKGG…SRVP). The segment covering 16-38 (AAAAAGGAAAAAARQQQQQQQQQ) has biased composition (low complexity). Over residues 39–55 (QPPPPQPQRQQHPPPPP) the composition is skewed to pro residues. A compositionally biased stretch (low complexity) spans 195 to 222 (SKGGSASGSNRSSSGGVLSASSSSSKLL). Lys-257 is covalently cross-linked (Glycyl lysine isopeptide (Lys-Gly) (interchain with G-Cter in SUMO); alternate). Lys-257 is covalently cross-linked (Glycyl lysine isopeptide (Lys-Gly) (interchain with G-Cter in SUMO2); alternate). 4 disordered regions span residues 298-328 (PTLP…NSNN), 389-505 (HKNK…ESVE), 616-730 (KSVP…SSHS), and 818-892 (SHGS…KARP). 2 stretches are compositionally biased toward basic and acidic residues: residues 318–327 (LEKKPEDNSN) and 389–403 (HKNK…RHPD). In terms of domain architecture, SCA7 spans 334-401 (KRLSEREFDP…KTREKELIRH (68 aa)). Pro residues-rich tracts occupy residues 405–419 (QQPP…PAPP), 448–458 (HTPSLPRPPGC), and 468–483 (IDPP…PLPA). A compositionally biased stretch (acidic residues) spans 493–502 (EEGEGDDKEE). Polar residues predominate over residues 616–629 (KSVPAHGTTLNAQP). The segment covering 640-669 (SMQSRQVSSSSSSPSTPSGLSSVPSSPMSR) has biased composition (low complexity). The segment covering 670 to 680 (KPQKLKSSKSL) has biased composition (basic residues). The segment covering 685–695 (SSGNSTNCQNA) has biased composition (polar residues). Composition is skewed to low complexity over residues 716 to 730 (HSSS…SSHS) and 840 to 851 (SPSSSSINNSSS).

Belongs to the ataxin-7 family. Component of the SAGA transcription coactivator-HAT complex, at least composed of SUPT3H, GCN5L2, TAF5L, TAF6L, SUPT7L, TADA3L, TAD1L, TAF10, TAF12, TRRAP, TAF9 and ATXN7. The STAGA core complex is associated with a subcomplex required for histone deubiquitination composed of ATXN7L3, ENY2 and USP22. Interacts with SORBS1, PSMC1 and CRX. Interacts with TRRAP, GCN5L2 and TAF10. Interacts with alpha tubulin. In terms of processing, proteolytically cleaved by caspase-7 (CASP7). The cleavage may be involved in SCA7 degeneration: the isoform fragments may exert distinct toxic influences that could contribute to selective neurodegeneration. Sumoylation decreases the aggregation propensity and cellular toxicity of forms with an expanded poly-Gln region but has no effect on subcellular location or interaction with components of the STAGA complex. Isoform a is expressed in CNS, but is expressed predominantly in the peripherical tissues. As to expression, isoform b is expressed in CNS. Also highly expressed in the frontal lobe, skeletal muscle and spinal cord and is expressed at a lower level in the lung, lymphoblast and intestine.

The protein localises to the nucleus. It is found in the nucleolus. It localises to the nucleus matrix. Its subcellular location is the cytoplasm. The protein resides in the cytoskeleton. Its function is as follows. Acts as a component of the SAGA (aka STAGA) transcription coactivator-HAT complex. Mediates the interaction of SAGA complex with the CRX and is involved in CRX-dependent gene activation. Probably involved in tethering the deubiquitination module within the SAGA complex. Necessary for microtubule cytoskeleton stabilization. Involved in neurodegeneration. This Homo sapiens (Human) protein is Ataxin-7 (ATXN7).